Consider the following 453-residue polypeptide: Na(+)/H(+) antiporter NhaA (453 aa).

The next 11 membrane-spanning stretches (helical) occupy residues 28–48 (FLHI…AALI), 79–99 (LHFL…GMEI), 115–135 (ALPL…YFIL), 144–164 (GWAV…ALLG), 173–193 (VFLL…IAVF), 196–216 (GGMD…VLGM), 241–261 (TGAH…VFAP), 321–341 (VAFG…LDGI), 355–375 (VLIA…FLMV), 393–413 (LVGL…TLAF), and 424–444 (LGIL…GFFQ).

Belongs to the NhaA Na(+)/H(+) (TC 2.A.33) antiporter family.

The protein resides in the cell inner membrane. The enzyme catalyses Na(+)(in) + 2 H(+)(out) = Na(+)(out) + 2 H(+)(in). Na(+)/H(+) antiporter that extrudes sodium in exchange for external protons. In Janthinobacterium sp. (strain Marseille) (Minibacterium massiliensis), this protein is Na(+)/H(+) antiporter NhaA.